Consider the following 373-residue polypeptide: Protein-glutamate methylesterase/protein-glutamine glutaminase 2 (373 aa).

The 118-residue stretch at K4–L121 folds into the Response regulatory domain. 4-aspartylphosphate is present on D55. The tract at residues F136–S181 is disordered. Residues A143–A153 are compositionally biased toward pro residues. Low complexity predominate over residues P154–S181. The 189-residue stretch at P182–E370 folds into the CheB-type methylesterase domain. Active-site residues include S197, H224, and D317.

It belongs to the CheB family. Post-translationally, phosphorylated by CheA. Phosphorylation of the N-terminal regulatory domain activates the methylesterase activity.

The protein localises to the cytoplasm. The catalysed reaction is [protein]-L-glutamate 5-O-methyl ester + H2O = L-glutamyl-[protein] + methanol + H(+). It carries out the reaction L-glutaminyl-[protein] + H2O = L-glutamyl-[protein] + NH4(+). Its function is as follows. Involved in chemotaxis. Part of a chemotaxis signal transduction system that modulates chemotaxis in response to various stimuli. Catalyzes the demethylation of specific methylglutamate residues introduced into the chemoreceptors (methyl-accepting chemotaxis proteins or MCP) by CheR. Also mediates the irreversible deamidation of specific glutamine residues to glutamic acid. The protein is Protein-glutamate methylesterase/protein-glutamine glutaminase 2 of Pseudomonas fluorescens (strain ATCC BAA-477 / NRRL B-23932 / Pf-5).